A 550-amino-acid chain; its full sequence is Glucose-6-phosphate isomerase (550 aa).

The Proton donor role is filled by Glu356. Residues His387 and Lys515 contribute to the active site.

It belongs to the GPI family.

It is found in the cytoplasm. It catalyses the reaction alpha-D-glucose 6-phosphate = beta-D-fructose 6-phosphate. Its pathway is carbohydrate biosynthesis; gluconeogenesis. The protein operates within carbohydrate degradation; glycolysis; D-glyceraldehyde 3-phosphate and glycerone phosphate from D-glucose: step 2/4. Catalyzes the reversible isomerization of glucose-6-phosphate to fructose-6-phosphate. The sequence is that of Glucose-6-phosphate isomerase from Aliivibrio salmonicida (strain LFI1238) (Vibrio salmonicida (strain LFI1238)).